We begin with the raw amino-acid sequence, 357 residues long: 3-dehydroquinate synthase (357 aa).

NAD(+) contacts are provided by residues 104 to 108 (GVVGD), 128 to 129 (TT), Lys141, and 168 to 171 (FLET). Positions 183, 243, and 260 each coordinate Zn(2+).

Belongs to the sugar phosphate cyclases superfamily. Dehydroquinate synthase family. It depends on Co(2+) as a cofactor. Zn(2+) is required as a cofactor. NAD(+) serves as cofactor.

It is found in the cytoplasm. The catalysed reaction is 7-phospho-2-dehydro-3-deoxy-D-arabino-heptonate = 3-dehydroquinate + phosphate. Its pathway is metabolic intermediate biosynthesis; chorismate biosynthesis; chorismate from D-erythrose 4-phosphate and phosphoenolpyruvate: step 2/7. Functionally, catalyzes the conversion of 3-deoxy-D-arabino-heptulosonate 7-phosphate (DAHP) to dehydroquinate (DHQ). This Streptococcus pyogenes serotype M5 (strain Manfredo) protein is 3-dehydroquinate synthase.